The sequence spans 543 residues: Periplasmic oligopeptide-binding protein OppA (543 aa).

A signal peptide spans 1 to 26; the sequence is MTNITKRSLVAAGVLAALMAGNVALA. C297 and C443 are joined by a disulfide.

The protein belongs to the bacterial solute-binding protein 5 family. The complex is composed of two ATP-binding proteins (OppD and OppF), two transmembrane proteins (OppB and OppC) and a solute-binding protein (OppA).

The protein localises to the periplasm. Its function is as follows. Part of the ABC transporter complex OppABCDF involved in the uptake of oligopeptides. Plays an important nutritional role. Binds peptides containing from two to five amino acid residues. Displays a preference for tripeptides and tetrapeptides over dipeptides and pentapeptides, for peptides composed of L-amino acids and for positively charged peptides. Cannot bind the cell wall peptide L-Ala-D-Gly-gamma-meso-diaminopimelic acid. This Escherichia coli (strain K12) protein is Periplasmic oligopeptide-binding protein OppA.